We begin with the raw amino-acid sequence, 444 residues long: Aflatoxin biosynthesis regulatory protein (444 aa).

The disordered stretch occupies residues 1 to 26; that stretch reads MVDHISPRASPGPIRSSQTRRARKLR. Positions 29 to 56 form a DNA-binding region, zn(2)-C6 fungal-type; the sequence is CTSCASSKVRCTKEKPACARCIERGLAC. The interval 64 to 167 is disordered; it reads MGRNPRAPSP…QGLGGDLAGQ (104 aa). A compositionally biased stretch (basic residues) spans 106-116; it reads TQAHTHAHSHP. Residues 120–130 are compositionally biased toward low complexity; the sequence is PQSHPQSNQPP. The segment covering 136 to 149 has biased composition (polar residues); that stretch reads PNGSSSVSAIFSHQ.

As to quaternary structure, interacts with its co-regulator aflS.

Its subcellular location is the nucleus. It localises to the endosome. Functionally, transcription factor involved in regulation of the aflatoxin biosynthesis gene cluster. Binds with its co-regulator aflS to AFLR1 elements (5'-TCGSWNNSCGR-3') present in the promoters of the aflatoxin cluster genes. The ratio of the expression data between aflS:aflR plays a crucial role in the regulation of aflatoxins production. A high ratio, produced at a range between 17 and 30 degrees Celsius, corresponds with the production profile of aflatoxin G1 biosynthesis. A low ratio, produced over 30 degrees Celsius, is related to aflatoxin B1 biosynthesis. This is Aflatoxin biosynthesis regulatory protein from Aspergillus parasiticus (strain ATCC 56775 / NRRL 5862 / SRRC 143 / SU-1).